The chain runs to 242 residues: Venom nerve growth factor 3 (242 aa).

Positions 1 to 18 (MSMLCYTLIIAFLIGIWA) are cleaved as a signal peptide. The propeptide occupies 19–125 (APQSEDNVPL…ALNRNIQAKR (107 aa)). The interval 45-69 (HEGLKTSRNTDQRHPAPKKVDDQEP) is disordered. Over residues 46-66 (EGLKTSRNTDQRHPAPKKVDD) the composition is skewed to basic and acidic residues. 3 cysteine pairs are disulfide-bonded: Cys-139–Cys-203, Cys-181–Cys-231, and Cys-191–Cys-233.

Belongs to the NGF-beta family. Homodimer; non-covalently linked. In terms of tissue distribution, expressed by the venom gland.

The protein localises to the secreted. In terms of biological role, nerve growth factor is important for the development and maintenance of the sympathetic and sensory nervous systems. It stimulates division and differentiation of sympathetic and embryonic sensory neurons as well as basal forebrain cholinergic neurons in the brain. Its relevance in the snake venom is not clear. However, it has been shown to inhibit metalloproteinase-dependent proteolysis of platelet glycoprotein Ib alpha, suggesting a metalloproteinase inhibition to prevent metalloprotease autodigestion and/or protection against prey proteases. Binds a lipid between the two protein chains in the homodimer. The lipid-bound form promotes histamine relase from mouse mast cells, contrary to the lipid-free form. This is Venom nerve growth factor 3 from Pseudechis australis (Mulga snake).